We begin with the raw amino-acid sequence, 1151 residues long: UDP-N-acetylglucosamine--peptide N-acetylglucosaminyltransferase (1151 aa).

TPR repeat units lie at residues 125-158, 193-226, 227-260, 261-294, 295-328, 329-362, 363-396, 397-430, 431-464, 465-498, 499-532, and 533-566; these read LKKV…DPNN, AEAY…KPEF, IDAY…NPDL, YCVR…QPQF, AVAW…DPNF, LDAY…SGNH, AVVH…QPHF, PDAY…CPTH, ADSQ…YPEF, AAAH…APTF, ADAY…NPAF, and ADAH…KPDF. The TPR 13; truncated repeat unit spans residues 567 to 577; the sequence is PDAYCNLAHCH. Residues 591 to 607 carry the Nuclear localization signal motif; that stretch reads RKLVQIVEDQLCKKRLP. His612 (proton acceptor) is an active-site residue. UDP contacts are provided by residues Gln954, Lys957, 1010 to 1013, 1016 to 1019, 1034 to 1036, and Asp1040; these read VAAK, HVRR, and GHT.

This sequence belongs to the glycosyltransferase 41 family. O-GlcNAc transferase subfamily.

It is found in the nucleus. Its subcellular location is the cytoplasm. It localises to the perinuclear region. It carries out the reaction L-seryl-[protein] + UDP-N-acetyl-alpha-D-glucosamine = 3-O-(N-acetyl-beta-D-glucosaminyl)-L-seryl-[protein] + UDP + H(+). It catalyses the reaction L-threonyl-[protein] + UDP-N-acetyl-alpha-D-glucosamine = 3-O-(N-acetyl-beta-D-glucosaminyl)-L-threonyl-[protein] + UDP + H(+). Its pathway is protein modification; protein glycosylation. Functionally, addition of nucleotide-activated sugars directly onto the polypeptide through O-glycosidic linkage with the hydroxyl of serine or threonine. Influences tap habituation in the mechanosensory neurons cell autonomously. This is UDP-N-acetylglucosamine--peptide N-acetylglucosaminyltransferase (ogt-1) from Caenorhabditis elegans.